A 137-amino-acid polypeptide reads, in one-letter code: Flagellar basal body rod protein FlgB (137 aa).

It belongs to the flagella basal body rod proteins family. As to quaternary structure, the basal body constitutes a major portion of the flagellar organelle and consists of a number of rings mounted on a central rod. In Gram-negative bacteria, at least four rings, L, P, S and M are present, whereas Gram-positive bacteria lack the L and P rings. The rod consists of about 26 subunits of FlgG in the distal portion, and FlgB, FlgC and FlgF build up the proximal portion of the rod with about 6 subunits each. Rod assembly occurs by export via the flagellum-specific pathway of its constituent proteins and by their incorporation into the rod structure in the probable order of FlgB, FlgC, FlgF and FlgG. Another protein, FliE, also assembles onto the stable rod structure.

Its subcellular location is the bacterial flagellum basal body. Structural component of flagellum, the bacterial motility apparatus. Part of the rod structure of flagellar basal body. This is Flagellar basal body rod protein FlgB from Yersinia ruckeri.